The chain runs to 794 residues: Protein sel-1 homolog 1 (794 aa).

Residues 1–21 form the signal peptide; sequence MRVRIGLTLLLCAVLLSLASA. Positions 21–50 are disordered; that stretch reads ASSDEEGSQDESLDSKTTLTSDESVKDHTT. Residues 22-737 form an interaction with ERLEC1, OS9 and SYVN1 region; the sequence is SSDEEGSQDE…DMFTQLDMDQ (716 aa). The Lumenal segment spans residues 22–738; it reads SSDEEGSQDE…MFTQLDMDQL (717 aa). Residues 23–32 are compositionally biased toward acidic residues; it reads SDEEGSQDES. S63 is modified (phosphoserine). Residues 64–77 are compositionally biased toward acidic residues; sequence EESELESSIQEEED. Residues 64 to 109 are disordered; it reads EESELESSIQEEEDSLKSQEGESVTEDISFLESPNPENKDYEEPKK. Positions 122–170 constitute a Fibronectin type-II domain; that stretch reads AHGEPCHFPFLFLDKEYDECTSDGREDGRLWCATTYDYKADEKWGFCET. Disulfide bonds link C127–C153 and C141–C168. 9 Sel1-like repeats span residues 183 to 218, 219 to 254, 255 to 290, 291 to 326, 373 to 409, 410 to 446, 447 to 482, 483 to 518, and 519 to 554; these read AEMMYQTGMKILNGSNKKSQKREAYRYLQKAASMNH, TKALERVSYALLFGDYLPQNIQAAREMFEKLTEEGS, PKGQTALGFLYASGLGVNSSQAKALVYYTFGALGGN, LIAHMVLGYRYWAGIGVLQSCESALTHYRLVANHVA, VQAQVGLGQLHLHGGRGVEQNHQRAFDYFNLAANAGN, SHAMAFLGKMYSEGSDIVPQSNETALHYFKKAADMGN, PVGQSGLGMAYLYGRGVQVNYDLALKYFQKAAEQGW, VDGQLQLGSMYYNGIGVKRDYKQALKYFNLASQGGH, and ILAFYNLAQMHASGTGVMRSCHTAVELFKNVCERGR. N-linked (GlcNAc...) asparagine glycosylation is found at N195 and N217. N-linked (GlcNAc...) asparagine glycosylation is present at N272. Positions 352-537 are important for homodimerization and oligomerization; that stretch reads NSGMLEEDLI…MHASGTGVMR (186 aa). N431 carries an N-linked (GlcNAc...) asparagine glycan. N-linked (GlcNAc...) asparagine glycosylation occurs at N608. Sel1-like repeat units follow at residues 627–662 and 664–699; these read TVARIKLGDYHFYGFGTDVDYETAFIHYRLASEQQH and AQAMFNLGYMHEKGLGIKQDIHLAKRFYDMAAEASP. Residues 643–723 are interaction with SYVN1; sequence TDVDYETAFI…VVYFLQYIRE (81 aa). The interval 738–794 is mediates retention in the endoplasmic reticulum; that stretch reads LLGPEWDLYLMTIIALLLGTVIAYRQRQHQDMPAPRPPGPRPAPPQQEGPPEQQPPQ. The chain crosses the membrane as a helical span at residues 739–759; that stretch reads LGPEWDLYLMTIIALLLGTVI. Over 760-794 the chain is Cytoplasmic; sequence AYRQRQHQDMPAPRPPGPRPAPPQQEGPPEQQPPQ. The tract at residues 766–794 is disordered; it reads HQDMPAPRPPGPRPAPPQQEGPPEQQPPQ. A compositionally biased stretch (pro residues) spans 771–794; that stretch reads APRPPGPRPAPPQQEGPPEQQPPQ.

This sequence belongs to the sel-1 family. Homodimer and homooligomer. May form a complex with ERLEC1, HSPA5, OS9, and SYVN1. Interacts with FOXRED2 and EDEM1. Interacts with LPL. Interacts with LMF1; may stabilize the complex formed by LPL and LMF1 and thereby promote the export of LPL dimers. Component of the HRD1 complex, which comprises at least SYNV1/HRD1, DERL1/2, FAM8A1, HERPUD1/HERP, OS9, SEL1L and UBE2J1. SYNV1 assembles with SEL1L and FAM8A1 through its transmembrane domains, but interaction with its cytoplasmic domain is required to confer stability to FAM8A1 and enhance recruitment of HERPUD1. The interaction with SYNV1/HRD1 is direct. In terms of assembly, (Microbial infection) Interacts with human cytomegalovirus protein UL148. In terms of processing, N-glycosylated. In terms of tissue distribution, highly expressed in pancreas.

The protein localises to the endoplasmic reticulum membrane. Plays a role in the endoplasmic reticulum quality control (ERQC) system also called ER-associated degradation (ERAD) involved in ubiquitin-dependent degradation of misfolded endoplasmic reticulum proteins. Enhances SYVN1 stability. Plays a role in LPL maturation and secretion. Required for normal differentiation of the pancreas epithelium, and for normal exocrine function and survival of pancreatic cells. May play a role in Notch signaling. The polypeptide is Protein sel-1 homolog 1 (Homo sapiens (Human)).